We begin with the raw amino-acid sequence, 65 residues long: Large ribosomal subunit protein bL35 (65 aa).

Residues 1-16 (MPKQKTHRASAKRFKR) show a composition bias toward basic residues. The segment at 1–20 (MPKQKTHRASAKRFKRTGSG) is disordered.

This sequence belongs to the bacterial ribosomal protein bL35 family.

This is Large ribosomal subunit protein bL35 from Streptococcus pyogenes serotype M1.